We begin with the raw amino-acid sequence, 492 residues long: Phenylalanine--tRNA ligase alpha subunit (492 aa).

L-phenylalanine-binding positions include T335, 374-376 (QLE), and Y414. E416 contributes to the Mg(2+) binding site. L-phenylalanine is bound at residue F439.

It belongs to the class-II aminoacyl-tRNA synthetase family. Phe-tRNA synthetase alpha subunit type 2 subfamily. Tetramer of two alpha and two beta subunits. Requires Mg(2+) as cofactor.

It localises to the cytoplasm. The enzyme catalyses tRNA(Phe) + L-phenylalanine + ATP = L-phenylalanyl-tRNA(Phe) + AMP + diphosphate + H(+). The polypeptide is Phenylalanine--tRNA ligase alpha subunit (Methanosarcina acetivorans (strain ATCC 35395 / DSM 2834 / JCM 12185 / C2A)).